We begin with the raw amino-acid sequence, 54 residues long: Large ribosomal subunit protein bL32c (54 aa).

Residues 1–20 (MAVPKKRVSKSKRDMRKTTW) show a composition bias toward basic residues. Residues 1–54 (MAVPKKRVSKSKRDMRKTTWKNKASKEAKKALSLAKSVSTGKSKSKGFQIKSSN) form a disordered region. Over residues 31 to 42 (ALSLAKSVSTGK) the composition is skewed to low complexity.

This sequence belongs to the bacterial ribosomal protein bL32 family.

The protein localises to the plastid. It is found in the chloroplast. This Chlorokybus atmophyticus (Soil alga) protein is Large ribosomal subunit protein bL32c.